The following is a 157-amino-acid chain: 2-C-methyl-D-erythritol 2,4-cyclodiphosphate synthase (157 aa).

A divalent metal cation is bound by residues aspartate 8 and histidine 10. 4-CDP-2-C-methyl-D-erythritol 2-phosphate-binding positions include 8–10 (DVH) and 34–35 (HS). Histidine 42 contacts a divalent metal cation. 4-CDP-2-C-methyl-D-erythritol 2-phosphate contacts are provided by residues 56 to 58 (DIG), 132 to 135 (TTNE), and arginine 142.

It belongs to the IspF family. In terms of assembly, homotrimer. A divalent metal cation is required as a cofactor.

The catalysed reaction is 4-CDP-2-C-methyl-D-erythritol 2-phosphate = 2-C-methyl-D-erythritol 2,4-cyclic diphosphate + CMP. The protein operates within isoprenoid biosynthesis; isopentenyl diphosphate biosynthesis via DXP pathway; isopentenyl diphosphate from 1-deoxy-D-xylulose 5-phosphate: step 4/6. Functionally, involved in the biosynthesis of isopentenyl diphosphate (IPP) and dimethylallyl diphosphate (DMAPP), two major building blocks of isoprenoid compounds. Catalyzes the conversion of 4-diphosphocytidyl-2-C-methyl-D-erythritol 2-phosphate (CDP-ME2P) to 2-C-methyl-D-erythritol 2,4-cyclodiphosphate (ME-CPP) with a corresponding release of cytidine 5-monophosphate (CMP). The chain is 2-C-methyl-D-erythritol 2,4-cyclodiphosphate synthase from Prosthecochloris aestuarii (strain DSM 271 / SK 413).